A 221-amino-acid chain; its full sequence is UPF0502 protein Sputw3181_2381 (221 aa).

This sequence belongs to the UPF0502 family.

This is UPF0502 protein Sputw3181_2381 from Shewanella sp. (strain W3-18-1).